The following is a 248-amino-acid chain: Phosphoadenosine 5'-phosphosulfate reductase (248 aa).

The Nucleophile; cysteine thiosulfonate intermediate role is filled by Cys-239.

The protein belongs to the PAPS reductase family. CysH subfamily.

The protein localises to the cytoplasm. The catalysed reaction is [thioredoxin]-disulfide + sulfite + adenosine 3',5'-bisphosphate + 2 H(+) = [thioredoxin]-dithiol + 3'-phosphoadenylyl sulfate. It participates in sulfur metabolism; hydrogen sulfide biosynthesis; sulfite from sulfate: step 3/3. Catalyzes the formation of sulfite from phosphoadenosine 5'-phosphosulfate (PAPS) using thioredoxin as an electron donor. The polypeptide is Phosphoadenosine 5'-phosphosulfate reductase (Alteromonas mediterranea (strain DSM 17117 / CIP 110805 / LMG 28347 / Deep ecotype)).